A 275-amino-acid polypeptide reads, in one-letter code: 4-hydroxy-tetrahydrodipicolinate reductase (275 aa).

Residues 13–18 (GAAGKM) and 108–110 (GTT) each bind NAD(+). The active-site Proton donor/acceptor is histidine 164. A (S)-2,3,4,5-tetrahydrodipicolinate-binding site is contributed by histidine 165. The active-site Proton donor is the lysine 168. Residue 174–175 (GT) coordinates (S)-2,3,4,5-tetrahydrodipicolinate.

It belongs to the DapB family.

Its subcellular location is the cytoplasm. The catalysed reaction is (S)-2,3,4,5-tetrahydrodipicolinate + NAD(+) + H2O = (2S,4S)-4-hydroxy-2,3,4,5-tetrahydrodipicolinate + NADH + H(+). It carries out the reaction (S)-2,3,4,5-tetrahydrodipicolinate + NADP(+) + H2O = (2S,4S)-4-hydroxy-2,3,4,5-tetrahydrodipicolinate + NADPH + H(+). It participates in amino-acid biosynthesis; L-lysine biosynthesis via DAP pathway; (S)-tetrahydrodipicolinate from L-aspartate: step 4/4. Catalyzes the conversion of 4-hydroxy-tetrahydrodipicolinate (HTPA) to tetrahydrodipicolinate. The protein is 4-hydroxy-tetrahydrodipicolinate reductase of Acaryochloris marina (strain MBIC 11017).